A 63-amino-acid chain; its full sequence is Small ribosomal subunit protein eS27 (63 aa).

Residues Cys18, Cys21, Cys37, and Cys40 each coordinate Zn(2+). Residues 18-40 form a C4-type zinc finger; it reads CIDCGNEQIVFSHPATKVRCLIC.

It belongs to the eukaryotic ribosomal protein eS27 family. In terms of assembly, part of the 30S ribosomal subunit. It depends on Zn(2+) as a cofactor.

This chain is Small ribosomal subunit protein eS27, found in Pyrococcus furiosus (strain ATCC 43587 / DSM 3638 / JCM 8422 / Vc1).